The sequence spans 585 residues: Testis-specific serine kinase substrate (585 aa).

A compositionally biased stretch (low complexity) spans 91–108; the sequence is EPDSSGTDSTTEDSGPLA. The segment at 91–126 is disordered; it reads EPDSSGTDSTTEDSGPLALPGPPASPTTPWAPEDPD. Phosphoserine occurs at positions 224, 281, and 309. Disordered regions lie at residues 262 to 309 and 559 to 585; these read SRHG…PSLS and LEGS…GSEQ.

Phosphorylated on serine residue(s) by STK22A/TSSK1 and STK22B/TSSK2.

Its subcellular location is the cytoplasm. The protein localises to the cytoskeleton. It localises to the microtubule organizing center. It is found in the centrosome. The protein resides in the centriole. Its function is as follows. May play a role in testicular physiology, most probably in the process of spermatogenesis or spermatid development. The sequence is that of Testis-specific serine kinase substrate (Tsks) from Rattus norvegicus (Rat).